Here is a 318-residue protein sequence, read N- to C-terminus: Olfactory receptor 2T34 (318 aa).

The Extracellular portion of the chain corresponds to 1 to 30; that stretch reads MCSGNQTSQNQTASTDFTLTGLFAESKHAA. Residues asparagine 5 and asparagine 10 are each glycosylated (N-linked (GlcNAc...) asparagine). A helical transmembrane segment spans residues 31–54; that stretch reads LLYTVTFLLFLMALTGNALLILLI. Residues 55–62 lie on the Cytoplasmic side of the membrane; it reads HSEPRLHT. Residues 63–84 form a helical membrane-spanning segment; it reads PMYFFISQLALMDLMYLCVTVP. The Extracellular portion of the chain corresponds to 85-105; the sequence is KMLVGQVTGDDTISPSGCGIQ. Cysteine 102 and cysteine 194 are disulfide-bonded. Residues 106–125 traverse the membrane as a helical segment; the sequence is MFFHLTLAGAEVFLLAAMAY. The Cytoplasmic portion of the chain corresponds to 126–144; sequence DRYAAVCRPLHYPLLMNQR. Residues 145–163 form a helical membrane-spanning segment; sequence VCQLLVSACWVLGMVDGLL. Residues 164–200 lie on the Extracellular side of the membrane; that stretch reads LTPITMSFPFCQSRKILSFFCETPALLKLSCSDVSLY. The helical transmembrane segment at 201–224 threads the bilayer; sequence KMLTYLCCILMLLTPIMVISSSYT. The Cytoplasmic segment spans residues 225–241; the sequence is LILHLIHRMNSAAGRRK. The helical transmembrane segment at 242–264 threads the bilayer; that stretch reads ALATCSSHMIIVLLLFGASFYTY. Residues 265–277 lie on the Extracellular side of the membrane; that stretch reads MLRSSYHTAEQDM. A helical membrane pass occupies residues 278-297; it reads MVSAFYTIFTPVLNPLIYSL. Residues 298-318 are Cytoplasmic-facing; the sequence is RNKDVTRALRSMMQSRMNQEK.

This sequence belongs to the G-protein coupled receptor 1 family.

Its subcellular location is the cell membrane. Odorant receptor. The chain is Olfactory receptor 2T34 (OR2T34) from Homo sapiens (Human).